The chain runs to 122 residues: Large ribosomal subunit protein bL12 (122 aa).

It belongs to the bacterial ribosomal protein bL12 family. In terms of assembly, homodimer. Part of the ribosomal stalk of the 50S ribosomal subunit. Forms a multimeric L10(L12)X complex, where L10 forms an elongated spine to which 2 to 4 L12 dimers bind in a sequential fashion. Binds GTP-bound translation factors.

Functionally, forms part of the ribosomal stalk which helps the ribosome interact with GTP-bound translation factors. Is thus essential for accurate translation. In Bdellovibrio bacteriovorus (strain ATCC 15356 / DSM 50701 / NCIMB 9529 / HD100), this protein is Large ribosomal subunit protein bL12.